The chain runs to 139 residues: Large ribosomal subunit protein uL16 (139 aa).

It belongs to the universal ribosomal protein uL16 family. Part of the 50S ribosomal subunit.

In terms of biological role, binds 23S rRNA and is also seen to make contacts with the A and possibly P site tRNAs. The sequence is that of Large ribosomal subunit protein uL16 from Synechocystis sp. (strain ATCC 27184 / PCC 6803 / Kazusa).